The sequence spans 294 residues: Holothin acyltransferase (294 aa).

The 130-residue stretch at 17 to 146 (WTSKPASLEE…SRLVGIHNQQ (130 aa)) folds into the N-acetyltransferase domain.

It carries out the reaction marinoloyl-CoA C + holothin = thiomarinol C + CoA. It catalyses the reaction pseudomonoyl-CoA C + holothin = pseudomonic acid C--holothin + CoA. Its pathway is antibiotic biosynthesis. Functionally, acyltransferase that catalyzes the formation of pseudomonic acid C-holothin (PAC-holothin), a thiomarinol analog, from pseudomonoyl-CoA C (PAC-CoA) and holothin. Accepts linear CoA substrates of different lengths, including propionyl-, hexanoyl-, octanoyl-, oleoyl- and dodecanoyl-CoA, readily converting all into the corresponding acyl-holothin adducts. In vivo, is probably involved in the biosynthesis of thiomarinol, a naturally occurring double-headed antibiotic. The chain is Holothin acyltransferase from Pseudoalteromonas sp. (strain SANK 73390).